The sequence spans 220 residues: Ribosomal RNA large subunit methyltransferase E (220 aa).

S-adenosyl-L-methionine is bound by residues Gly-64, Trp-66, Asp-84, Asp-100, and Asp-125. The Proton acceptor role is filled by Lys-165.

The protein belongs to the class I-like SAM-binding methyltransferase superfamily. RNA methyltransferase RlmE family.

The protein localises to the cytoplasm. The catalysed reaction is uridine(2552) in 23S rRNA + S-adenosyl-L-methionine = 2'-O-methyluridine(2552) in 23S rRNA + S-adenosyl-L-homocysteine + H(+). In terms of biological role, specifically methylates the uridine in position 2552 of 23S rRNA at the 2'-O position of the ribose in the fully assembled 50S ribosomal subunit. This chain is Ribosomal RNA large subunit methyltransferase E, found in Thiobacillus denitrificans (strain ATCC 25259 / T1).